The sequence spans 491 residues: Glycylpeptide N-tetradecanoyltransferase (491 aa).

Residue 45 to 48 (HKFW) participates in tetradecanoyl-CoA binding. The disordered stretch occupies residues 53 to 79 (VPQITGSGASAPMEEGPIDDPKTPADV). Residues 182–184 (LCV) and 190–194 (SKRLA) contribute to the tetradecanoyl-CoA site. Leu-491 functions as the Proton acceptor; via carboxylate in the catalytic mechanism.

This sequence belongs to the NMT family. As to quaternary structure, monomer.

It is found in the cytoplasm. It catalyses the reaction N-terminal glycyl-[protein] + tetradecanoyl-CoA = N-tetradecanoylglycyl-[protein] + CoA + H(+). In terms of biological role, adds a myristoyl group to the N-terminal glycine residue of certain cellular proteins. The protein is Glycylpeptide N-tetradecanoyltransferase of Cryptococcus neoformans (Filobasidiella neoformans).